We begin with the raw amino-acid sequence, 416 residues long: Zinc finger protein 92 homolog (416 aa).

In terms of domain architecture, KRAB spans 14 to 85 (VSFEDVSVYF…DIPRTWATAG (72 aa)). Positions 86-125 (LHIGDRTQSKTSTSTQKHSGRQLPGADPQGGKEGQAARSS) are disordered. 8 consecutive C2H2-type zinc fingers follow at residues 152–174 (YLCQ…RIIH), 180–202 (YACP…QRIH), 208–230 (YACP…QVIH), 236–258 (FACG…ARVH), 264–286 (YACP…QRTH), 292–314 (YACG…QRSH), 320–342 (FACR…RRVH), and 348–370 (YECS…QAVH). The disordered stretch occupies residues 368 to 416 (AVHGARRPAKAETARRLAGPGSTGPGSAVAATSPPRPSTAARPSRPSRR). Low complexity predominate over residues 394 to 416 (SAVAATSPPRPSTAARPSRPSRR).

It belongs to the krueppel C2H2-type zinc-finger protein family.

It is found in the nucleus. In terms of biological role, KRAB domain-containing zinc-finger protein that represses B1/Alu SINE transposable elements and modulates the transcription of nearby genes in a tissue-specific manner. It regulates glucose homeostasis and lipid metabolism by modulating the expression of the endocrine cell-defining transcription factor, MAFB, in pancreatic islets and, the fat metabolism regulator, ACACB, in adipose tissue and muscle. This Homo sapiens (Human) protein is Zinc finger protein 92 homolog (ZFP92).